Consider the following 445-residue polypeptide: Cytochrome b (445 aa).

Residues 2–49 are Cytoplasmic-facing; sequence SGIPHDHYEPRTGIEKWLHSRLPIVALAYDTIMIPTPRNLNWMWIWGV. The chain crosses the membrane as a helical span at residues 50–67; the sequence is VLAFCLVLQIVTGIVLAM. Residues 68–94 are Periplasmic-facing; sequence HYTPHVDLAFASVEHIMRNVNGGFMLR. The chain crosses the membrane as a helical span at residues 95–113; that stretch reads YLHANGASLFFIAVYLHIF. His97 and His111 together coordinate heme b. At 114-129 the chain is on the cytoplasmic side; that stretch reads RGLYYGSYKAPREVTW. A helical membrane pass occupies residues 130–149; it reads IVGMLIYLAMMATAFMGYVL. The Periplasmic portion of the chain corresponds to 150-193; that stretch reads PWGQMSFWGATVITGLFGAIPGIGHSIQTWLLGGPAVDNATLNR. The helical transmembrane segment at 194-216 threads the bilayer; that stretch reads FFSLHYLLPFVIAALVAIHIWAF. Heme b contacts are provided by His198 and His212. Over 217 to 252 the chain is Cytoplasmic; that stretch reads HSTGNNNPTGVEVRRTSKAEAQKDTVPFWPYFIIKD. Residues 253–270 form a helical membrane-spanning segment; the sequence is VFALAVVLLVFFAIVGFM. The Periplasmic portion of the chain corresponds to 271 to 329; the sequence is PNYLGHPDNYIEANPLSTPAHIVPEWYFLPFYAILRAFTADVWVVQIANFISFGIIDAK. Residues 330–346 traverse the membrane as a helical segment; the sequence is FFGVLAMFGAILVMALV. Residues 347-364 lie on the Cytoplasmic side of the membrane; that stretch reads PWLDTSPVRSGRYRPMFK. The chain crosses the membrane as a helical span at residues 365–382; sequence IYFWLLAADFVILTWVGA. Topologically, residues 383–388 are periplasmic; it reads QQTTFP. Residues 389 to 408 form a helical membrane-spanning segment; it reads YDWISLIASAYWFAYFLVIL. The Cytoplasmic segment spans residues 409–445; the sequence is PILGAIEKPVAPPATIEEDFNAHYSPATGGTKTVVAE.

The protein belongs to the cytochrome b family. As to quaternary structure, the main subunits of complex b-c1 are: cytochrome b, cytochrome c1 and the Rieske protein. Heme b is required as a cofactor.

Its subcellular location is the cell membrane. Its function is as follows. Component of the ubiquinol-cytochrome c reductase complex (complex III or cytochrome b-c1 complex), which is a respiratory chain that generates an electrochemical potential coupled to ATP synthesis. The protein is Cytochrome b (petB) of Cereibacter sphaeroides (Rhodobacter sphaeroides).